The sequence spans 359 residues: 3-dehydroquinate synthase (359 aa).

NAD(+)-binding positions include 70-75, 105-109, 129-130, K142, K151, and 169-172; these read DGEQYK, GVIGD, TT, and FYKT. Residues E184, H247, and H264 each contribute to the Zn(2+) site.

The protein belongs to the sugar phosphate cyclases superfamily. Dehydroquinate synthase family. The cofactor is Co(2+). It depends on Zn(2+) as a cofactor. NAD(+) is required as a cofactor.

Its subcellular location is the cytoplasm. It carries out the reaction 7-phospho-2-dehydro-3-deoxy-D-arabino-heptonate = 3-dehydroquinate + phosphate. The protein operates within metabolic intermediate biosynthesis; chorismate biosynthesis; chorismate from D-erythrose 4-phosphate and phosphoenolpyruvate: step 2/7. Functionally, catalyzes the conversion of 3-deoxy-D-arabino-heptulosonate 7-phosphate (DAHP) to dehydroquinate (DHQ). In Francisella tularensis subsp. tularensis (strain FSC 198), this protein is 3-dehydroquinate synthase.